The chain runs to 240 residues: 7-cyano-7-deazaguanine synthase (240 aa).

An ATP-binding site is contributed by 18–28 (FSGGQDSTTCL). 4 residues coordinate Zn(2+): C197, C206, C209, and C212.

Belongs to the QueC family. Zn(2+) is required as a cofactor.

The catalysed reaction is 7-carboxy-7-deazaguanine + NH4(+) + ATP = 7-cyano-7-deazaguanine + ADP + phosphate + H2O + H(+). It participates in purine metabolism; 7-cyano-7-deazaguanine biosynthesis. Catalyzes the ATP-dependent conversion of 7-carboxy-7-deazaguanine (CDG) to 7-cyano-7-deazaguanine (preQ(0)). This Shewanella baltica (strain OS223) protein is 7-cyano-7-deazaguanine synthase.